The chain runs to 274 residues: Oxidized low-density lipoprotein receptor 1 (274 aa).

The tract at residues 1–28 (MTLDDLKSNSMKDQPDEKSNGDKAEGPR) is disordered. The Cytoplasmic portion of the chain corresponds to 1 to 37 (MTLDDLKSNSMKDQPDEKSNGDKAEGPRSLSTLRWRP). Residues 13–26 (DQPDEKSNGDKAEG) show a composition bias toward basic and acidic residues. The chain crosses the membrane as a helical; Signal-anchor for type II membrane protein span at residues 38 to 60 (AALILGLLCLGLLVTVILLIIQL). Cys-46 is lipidated: S-palmitoyl cysteine. A neck region spans residues 61-150 (SQVSDLLKQQ…SGPCPQDWLW (90 aa)). At 61 to 274 (SQVSDLLKQQ…QKRANLLRAQ (214 aa)) the chain is on the extracellular side. Residues 89–142 (RQAEKSSQESQRELTEMIETLAHKLDEKSKKLMELQQQNLNLQKALEKAANFSG) adopt a coiled-coil conformation. Residue Asn-139 is glycosylated (N-linked (GlcNAc...) asparagine). Disulfide bonds link Cys-144/Cys-155, Cys-172/Cys-264, and Cys-243/Cys-256. In terms of domain architecture, C-type lectin spans 151-265 (HEENCYKFSS…CILNAFSICQ (115 aa)).

As to quaternary structure, homodimer; disulfide-linked. May form a hexamer composed of 3 homodimers. Interacts with HSP70. In terms of processing, N-glycosylated.

The protein localises to the cell membrane. It localises to the membrane raft. The protein resides in the secreted. Receptor that mediates the recognition, internalization and degradation of oxidatively modified low density lipoprotein (oxLDL) by vascular endothelial cells. OxLDL is a marker of atherosclerosis that induces vascular endothelial cell activation and dysfunction, resulting in pro-inflammatory responses, pro-oxidative conditions and apoptosis. Its association with oxLDL induces the activation of NF-kappa-B through an increased production of intracellular reactive oxygen and a variety of pro-atherogenic cellular responses including a reduction of nitric oxide (NO) release, monocyte adhesion and apoptosis. In addition to binding oxLDL, it acts as a receptor for the HSP70 protein involved in antigen cross-presentation to naive T-cells in dendritic cells, thereby participating in cell-mediated antigen cross-presentation. Also involved in inflammatory process, by acting as a leukocyte-adhesion molecule at the vascular interface in endotoxin-induced inflammation. Also acts as a receptor for advanced glycation end (AGE) products, activated platelets, monocytes, apoptotic cells and both Gram-negative and Gram-positive bacteria. This Sus scrofa (Pig) protein is Oxidized low-density lipoprotein receptor 1 (OLR1).